A 227-amino-acid chain; its full sequence is Phosphatidylethanolamine-binding protein 4 (227 aa).

The N-terminal stretch at 1–22 is a signal peptide; the sequence is MGWTMRLVTAALLLGLMMVVTG. The N-linked (GlcNAc...) (complex) asparagine glycan is linked to Asn-169. The segment at 188–227 is important for secretion; that stretch reads EPEASTQFMTQNYQDSPTLQAPRERASEPKHKNQAEIAAC. Residues 202–227 form a disordered region; sequence DSPTLQAPRERASEPKHKNQAEIAAC. Basic and acidic residues predominate over residues 209-221; the sequence is PRERASEPKHKNQ.

It belongs to the phosphatidylethanolamine-binding protein family.

The protein resides in the secreted. Promotes AKT phosphorylation, suggesting a possible role in the PI3K-AKT signaling pathway. The protein is Phosphatidylethanolamine-binding protein 4 (PEBP4) of Homo sapiens (Human).